The following is an 85-amino-acid chain: Conotoxin Lt28.2 (85 aa).

The first 21 residues, 1-21 (MPKLEMMLLVLLILPLCYIDA), serve as a signal peptide directing secretion. Residues 22–40 (VGPPPPWNMEDEIIEHWQK) constitute a propeptide that is removed on maturation.

The protein belongs to the conotoxin D superfamily. Post-translationally, contains 5 disulfide bonds. In terms of tissue distribution, expressed by the venom duct.

The protein localises to the secreted. In terms of biological role, probable neurotoxin. This is Conotoxin Lt28.2 from Conus litteratus (Lettered cone).